The primary structure comprises 210 residues: Peptidyl-tRNA hydrolase (210 aa).

Position 30 (Tyr-30) interacts with tRNA. His-35 (proton acceptor) is an active-site residue. The tRNA site is built by Tyr-81, Asn-83, and Asn-129.

The protein belongs to the PTH family. As to quaternary structure, monomer.

It localises to the cytoplasm. The enzyme catalyses an N-acyl-L-alpha-aminoacyl-tRNA + H2O = an N-acyl-L-amino acid + a tRNA + H(+). Its function is as follows. Hydrolyzes ribosome-free peptidyl-tRNAs (with 1 or more amino acids incorporated), which drop off the ribosome during protein synthesis, or as a result of ribosome stalling. Functionally, catalyzes the release of premature peptidyl moieties from peptidyl-tRNA molecules trapped in stalled 50S ribosomal subunits, and thus maintains levels of free tRNAs and 50S ribosomes. This Bordetella petrii (strain ATCC BAA-461 / DSM 12804 / CCUG 43448) protein is Peptidyl-tRNA hydrolase.